A 360-amino-acid polypeptide reads, in one-letter code: POU domain, class 5, transcription factor 1 (360 aa).

Disordered regions lie at residues 1-53 (MAGH…GVGP) and 87-117 (QGGL…PCTV). The short motif at 4–12 (HLASDFAFS) is the 9aaTAD element. The segment covering 17-26 (GGGDGPGGPE) has biased composition (gly residues). Ser111 is modified (phosphoserine; by MAPK). Lys123 participates in a covalent cross-link: Glycyl lysine isopeptide (Lys-Gly) (interchain with G-Cter in SUMO). A POU-specific domain is found at 138–212 (DIKALQKELE…LLQKWVEEAD (75 aa)). Residues Arg157 and Gln164 each coordinate DNA. DNA-binding regions lie at residues 180–186 (SQTTICR) and 193–196 (SFKN). The segment at residues 230-289 (RKRKRTSIENRVRGSLENLFLQCPKPTLQQISHIAQQLGLEKDVVRVWFCNRRQKGKRSS) is a DNA-binding region (homeobox). Residue Thr235 is modified to Phosphothreonine. Phosphoserine occurs at positions 236, 289, 290, and 355.

Belongs to the POU transcription factor family. Class-5 subfamily. In terms of assembly, interacts with PKM. Interacts with WWP2. Interacts with UBE2I and ZSCAN10. Interacts with PCGF1. Interacts with ESRRB; recruits ESRRB near the POU5F1-SOX2 element in the NANOG proximal promoter; the interaction is DNA independent. Interacts with ZNF322. Interacts with MAPK8 and MAPK9; the interaction allows MAPK8 and MAPK9 to phosphorylate POU5F1 on Ser-355. Interacts (when phosphorylated on Ser-355) with FBXW8. Interacts with FBXW4. Interacts with SOX2 and SOX15; binds synergistically with either SOX2 or SOX15 to DNA. Interacts with DDX56. Sumoylation enhances the protein stability, DNA binding and transactivation activity. Sumoylation is required for enhanced YES1 expression. Post-translationally, ubiquitinated; undergoes 'Lys-63'-linked polyubiquitination by WWP2 leading to proteasomal degradation. In terms of processing, ERK1/2-mediated phosphorylation at Ser-111 promotes nuclear exclusion and proteasomal degradation. Phosphorylation at Thr-235 and Ser-236 decrease DNA-binding and alters ability to activate transcription.

It is found in the cytoplasm. The protein localises to the nucleus. Functionally, transcription factor that binds to the octamer motif (5'-ATTTGCAT-3'). Forms a trimeric complex with SOX2 or SOX15 on DNA and controls the expression of a number of genes involved in embryonic development such as YES1, FGF4, UTF1 and ZFP206. Critical for early embryogenesis and for embryonic stem cell pluripotency. The chain is POU domain, class 5, transcription factor 1 (POU5F1) from Macaca mulatta (Rhesus macaque).